The sequence spans 201 residues: Large ribosomal subunit protein uL4 (201 aa).

The tract at residues 45 to 71 (AQKTRAEVTGSGKKPWRQKGTGRARAG) is disordered.

It belongs to the universal ribosomal protein uL4 family. In terms of assembly, part of the 50S ribosomal subunit.

Functionally, one of the primary rRNA binding proteins, this protein initially binds near the 5'-end of the 23S rRNA. It is important during the early stages of 50S assembly. It makes multiple contacts with different domains of the 23S rRNA in the assembled 50S subunit and ribosome. Its function is as follows. Forms part of the polypeptide exit tunnel. This chain is Large ribosomal subunit protein uL4, found in Shewanella oneidensis (strain ATCC 700550 / JCM 31522 / CIP 106686 / LMG 19005 / NCIMB 14063 / MR-1).